The sequence spans 131 residues: Insulin-like 3 (131 aa).

The N-terminal stretch at 1–26 is a signal peptide; it reads MDPHPLTWALVLLGPALALSRAPAPA. 3 disulfides stabilise this stretch: C34–C116, C46–C129, and C115–C120. The propeptide at 58–103 is c peptide like; that stretch reads AVAGGDRELLQWLEGQHLFHGLMASGDPMLVLAPQPPPQASGHHHH.

It belongs to the insulin family. Heterodimer of a B chain and an A chain linked by two disulfide bonds. In terms of tissue distribution, expressed exclusively in prenatal and postnatal Leydig cells.

The protein localises to the secreted. Functionally, seems to play a role in testicular function. May be a trophic hormone with a role in testicular descent in fetal life. Is a ligand for LGR8 receptor. This Sus scrofa (Pig) protein is Insulin-like 3 (INSL3).